The chain runs to 541 residues: Methyl-accepting chemotaxis protein PcaY (541 aa).

The Cytoplasmic segment spans residues 1–10; that stretch reads MLANLKIRTG. The chain crosses the membrane as a helical span at residues 11–31; it reads MFWVLSLFSLTLLFSTASAWW. Topologically, residues 32-189 are periplasmic; the sequence is AAVGSDQQIT…ESDRRLARAQ (158 aa). The interval 35–187 is ligand-binding domain; the sequence is GSDQQITELD…MLESDRRLAR (153 aa). A helical transmembrane segment spans residues 190–210; the sequence is LLSLCLLGMTVVLAVLCWAFI. Topologically, residues 211-541 are cytoplasmic; it reads AQRVLHPLRE…MTALVGRFKV (331 aa). The region spanning 212 to 264 is the HAMP domain; it reads QRVLHPLREAGGHFRRIASGDLSVPVQGQGNNEIGQLFHELQRMQQSQRDTLG. Positions 269-505 constitute a Methyl-accepting transducer domain; it reads CARQLDAAAS…EVDRNLLNIR (237 aa). The interval 322-341 is disordered; sequence TSQTTSESNQLAAQSRRQVS.

It belongs to the methyl-accepting chemotaxis (MCP) protein family.

It is found in the cell inner membrane. Functionally, chemotactic-signal transducers respond to changes in the concentration of attractants and repellents in the environment, transduce a signal from the outside to the inside of the cell, and facilitate sensory adaptation through the variation of the level of methylation. PcaY is responsible for the detection of multiple aromatic and hydroaromatic compounds that are metabolized through the beta-ketoadipate catabolic pathway, including vanillin, vanillate, 4-hydroxybenzoate (4-HBA), benzoate and protocatechuate. It also senses several nonmetabolizable aromatic compounds. The protein is Methyl-accepting chemotaxis protein PcaY of Pseudomonas putida (strain ATCC 700007 / DSM 6899 / JCM 31910 / BCRC 17059 / LMG 24140 / F1).